Consider the following 341-residue polypeptide: L-threonine 3-dehydrogenase (341 aa).

C38 provides a ligand contact to Zn(2+). Catalysis depends on charge relay system residues T40 and H43. 6 residues coordinate Zn(2+): H63, E64, C93, C96, C99, and C107. Residues I175, D195, R200, 262–264 (LGI), and 286–287 (IY) each bind NAD(+).

It belongs to the zinc-containing alcohol dehydrogenase family. In terms of assembly, homotetramer. Zn(2+) serves as cofactor.

It is found in the cytoplasm. The enzyme catalyses L-threonine + NAD(+) = (2S)-2-amino-3-oxobutanoate + NADH + H(+). It functions in the pathway amino-acid degradation; L-threonine degradation via oxydo-reductase pathway; glycine from L-threonine: step 1/2. Catalyzes the NAD(+)-dependent oxidation of L-threonine to 2-amino-3-ketobutyrate. The polypeptide is L-threonine 3-dehydrogenase (Shewanella loihica (strain ATCC BAA-1088 / PV-4)).